Consider the following 357-residue polypeptide: N-acetyl-gamma-glutamyl-phosphate reductase (357 aa).

Cys160 is a catalytic residue.

This sequence belongs to the NAGSA dehydrogenase family. Type 1 subfamily.

The protein resides in the cytoplasm. The enzyme catalyses N-acetyl-L-glutamate 5-semialdehyde + phosphate + NADP(+) = N-acetyl-L-glutamyl 5-phosphate + NADPH + H(+). It participates in amino-acid biosynthesis; L-arginine biosynthesis; N(2)-acetyl-L-ornithine from L-glutamate: step 3/4. In terms of biological role, catalyzes the NADPH-dependent reduction of N-acetyl-5-glutamyl phosphate to yield N-acetyl-L-glutamate 5-semialdehyde. This Synechococcus sp. (strain CC9605) protein is N-acetyl-gamma-glutamyl-phosphate reductase.